Reading from the N-terminus, the 1449-residue chain is VWFA and cache domain-containing protein CG16868 (1449 aa).

The first 23 residues, 1-23, serve as a signal peptide directing secretion; the sequence is MWPNSNLNAVLLILAVLACPTSS. The Extracellular segment spans residues 24-1220; that stretch reads QHVPLAMANS…NPQREQHAYS (1197 aa). Residues Asn-32, Asn-112, Asn-153, Asn-407, Asn-447, and Asn-497 are each glycosylated (N-linked (GlcNAc...) asparagine). A VWFA domain is found at 320 to 541; that stretch reads FVLFLIDVGS…TSLPQTSSRI (222 aa). In terms of domain architecture, Cache 1 spans 557–639; that stretch reads VHPPVVDADS…PRPLIQRETS (83 aa). Residues Asn-649, Asn-668, and Asn-707 are each glycosylated (N-linked (GlcNAc...) asparagine). The 46-residue stretch at 889–934 folds into the Cache 2 domain; the sequence is TAPYLDAGGAGYIITIAHTIFEGKAHALHSAQQDRPVAVVALDVPY. Asn-1015, Asn-1025, Asn-1059, and Asn-1111 each carry an N-linked (GlcNAc...) asparagine glycan. Residues 1221–1241 traverse the membrane as a helical segment; the sequence is AFGPLGGAIVVLVMVIGFAIY. At 1242-1449 the chain is on the cytoplasmic side; that stretch reads CYRHNLDAQT…VHRHMETAES (208 aa). Disordered stretches follow at residues 1307 to 1339 and 1352 to 1416; these read YHVS…SSDQ and DKRH…GGSV. Positions 1359–1369 are enriched in low complexity; the sequence is DTMSISTSISS. Positions 1370 to 1392 are enriched in polar residues; that stretch reads PTNRQQSSSQPNTHPYLSNQPTS.

This sequence belongs to the calcium channel subunit alpha-2/delta family.

The protein resides in the membrane. This is VWFA and cache domain-containing protein CG16868 from Drosophila melanogaster (Fruit fly).